A 242-amino-acid chain; its full sequence is Transcriptional regulatory protein btr (242 aa).

Residues 158–231 (MRSEQRLAAF…QREVRLIDLP (74 aa)) enclose the HTH crp-type domain. The H-T-H motif DNA-binding region spans 191-210 (REEIGNYLGLTLETVSRLFS).

Functionally, may regulate gene expression in response to changes in oxygen levels or to changes in the redox potential of the bacterial environment. The chain is Transcriptional regulatory protein btr (btr) from Bordetella pertussis (strain Tohama I / ATCC BAA-589 / NCTC 13251).